The chain runs to 411 residues: Glutamate dehydrogenase (411 aa).

The active site involves Lys-102.

Belongs to the Glu/Leu/Phe/Val dehydrogenases family.

It catalyses the reaction L-glutamate + NAD(+) + H2O = 2-oxoglutarate + NH4(+) + NADH + H(+). The catalysed reaction is L-glutamate + NADP(+) + H2O = 2-oxoglutarate + NH4(+) + NADPH + H(+). The chain is Glutamate dehydrogenase (GDH) from Vitis vinifera (Grape).